The chain runs to 498 residues: Lysine--tRNA ligase (498 aa).

Mg(2+)-binding residues include E407 and E414.

It belongs to the class-II aminoacyl-tRNA synthetase family. In terms of assembly, homodimer. Mg(2+) is required as a cofactor.

It is found in the cytoplasm. The enzyme catalyses tRNA(Lys) + L-lysine + ATP = L-lysyl-tRNA(Lys) + AMP + diphosphate. This Rhizobium etli (strain CIAT 652) protein is Lysine--tRNA ligase.